The sequence spans 420 residues: L-cysteine:1D-myo-inositol 2-amino-2-deoxy-alpha-D-glucopyranoside ligase (420 aa).

A Zn(2+)-binding site is contributed by C46. L-cysteinyl-5'-AMP contacts are provided by residues 46–49, T61, and 84–86; these read CGIT and NVT. Positions 48–58 match the 'HIGH' region motif; the sequence is ITPYDSTHLGH. The 'ERGGDP' region signature appears at 194-199; that stretch reads ERGGDP. Residue W235 participates in L-cysteinyl-5'-AMP binding. C239 contacts Zn(2+). 257–259 is a binding site for L-cysteinyl-5'-AMP; the sequence is GTD. H264 serves as a coordination point for Zn(2+). Residue V291 coordinates L-cysteinyl-5'-AMP. The 'KMSKS' region signature appears at 297–301; it reads KMSKS.

This sequence belongs to the class-I aminoacyl-tRNA synthetase family. MshC subfamily. Monomer. Zn(2+) is required as a cofactor.

It catalyses the reaction 1D-myo-inositol 2-amino-2-deoxy-alpha-D-glucopyranoside + L-cysteine + ATP = 1D-myo-inositol 2-(L-cysteinylamino)-2-deoxy-alpha-D-glucopyranoside + AMP + diphosphate + H(+). Its function is as follows. Catalyzes the ATP-dependent condensation of GlcN-Ins and L-cysteine to form L-Cys-GlcN-Ins. This chain is L-cysteine:1D-myo-inositol 2-amino-2-deoxy-alpha-D-glucopyranoside ligase, found in Beutenbergia cavernae (strain ATCC BAA-8 / DSM 12333 / CCUG 43141 / JCM 11478 / NBRC 16432 / NCIMB 13614 / HKI 0122).